We begin with the raw amino-acid sequence, 384 residues long: Outer membrane protein assembly factor BamB (384 aa).

A signal peptide spans 1–21 (MKLTLKRKFIAVLALTSLLGA). Cys-22 is lipidated: N-palmitoyl cysteine. A lipid anchor (S-diacylglycerol cysteine) is attached at Cys-22.

Belongs to the BamB family. In terms of assembly, part of the Bam complex.

It is found in the cell outer membrane. Functionally, part of the outer membrane protein assembly complex, which is involved in assembly and insertion of beta-barrel proteins into the outer membrane. This is Outer membrane protein assembly factor BamB from Taylorella asinigenitalis (strain MCE3).